The sequence spans 544 residues: Nucleosome assembly protein 1-like 3 (544 aa).

Disordered regions lie at residues 1 to 109 (MAEA…LFLD) and 168 to 345 (PTEE…KKED). The span at 35 to 83 (SNSSSSTNSCSSSGSSSSGSSSSSSSSSSSSSSSSSSSSGSSGSSSNGS) shows a compositional bias: low complexity. Over residues 168–192 (PTEEECEWNSEEEFSGDEEMQDDTP) the composition is skewed to acidic residues. Composition is skewed to basic and acidic residues over residues 207–228 (CNEK…PEAK), 235–277 (PKET…KADS), and 314–332 (PARE…EGVN).

It belongs to the nucleosome assembly protein (NAP) family. In terms of tissue distribution, expressed in brain.

It localises to the nucleus. It is found in the cytoplasm. The protein is Nucleosome assembly protein 1-like 3 (Nap1l3) of Mus musculus (Mouse).